The following is a 309-amino-acid chain: Putative lipid kinase YtlR (309 aa).

In terms of domain architecture, DAGKc spans 1–134; that stretch reads MSHWFFIINP…FHLGSVNFLQ (134 aa). ATP is bound by residues 9–13, Thr40, and 69–75; these read NPTAG and GDGTMHE. Residues Asn229, Glu232, and Thr234 each contribute to the Mg(2+) site. The active-site Proton acceptor is the Glu289.

This sequence belongs to the diacylglycerol/lipid kinase family. Mg(2+) serves as cofactor.

In terms of biological role, may catalyze the ATP-dependent phosphorylation of lipids other than diacylglycerol (DAG). In fact, is not able to exhibit diacylglycerol kinase activity in vitro. This Bacillus subtilis (strain 168) protein is Putative lipid kinase YtlR (ytlR).